A 381-amino-acid chain; its full sequence is Alkanesulfonate monooxygenase (381 aa).

Belongs to the SsuD family. In terms of assembly, homotetramer.

The enzyme catalyses an alkanesulfonate + FMNH2 + O2 = an aldehyde + FMN + sulfite + H2O + 2 H(+). Functionally, catalyzes the desulfonation of aliphatic sulfonates. This chain is Alkanesulfonate monooxygenase, found in Escherichia coli O6:K15:H31 (strain 536 / UPEC).